The chain runs to 819 residues: MSNIQNMSLEDIMGERFGRYSKYIIQERALPDIRDGLKPVQRRILYSMNKDGNTFEKGYRKSAKSVGNIMGNFHPHGDSSIYDAMVRMSQDWKNREILVEMHGNNGSMDGDPPAAMRYTEARLSEIAGYLLQDIEKNTVPFAWNFDDTEKEPTVLPAAFPNLLVNGSSGISAGYATDIPPHNLSEVIDAVVYMIDHPKASLEKLMEFLPGPDFPTGGIIQGADEIKKAYETGKGRVVVRSRTEIEELKGGKQQIIVTEIPYEVNKAVLVKKIDDVRVNNKVPGIVEVRDESDRTGLRIAIELKKDADSQTILNYLLKYTDLQVNYNFNMVAIDHFTPRQVGLQKILSSYISHRKDIIIERSKFDKAKAEKRLHIVEGLIRVLSILDEIIALIRSSDNKADAKENLKVSYDFSEEQAEAIVTLQLYRLTNTDIVTLQNEENDLRDLITTLSAIIGDEATMYNVMKRELREVKKKFANPRLSELQAESQIIEIDTASLIAEEETFVSVTRGGYLKRTSPRSFNASSLEEVGKRDDDELIFVKQAKTTEHLLLFTTLGNVIYRPIHELTDLRWKDIGEHLSQTISNFATEEEILYADIVTSFDQGLYVAVTQNGFIKRFDRKELSPWRTYKSKSTKYVKLKDDKDRVVTLSPVIMEDLLLVTKNGYALRFSSQEVPIQGLKSAGVKGINLKNDDSLASAFAVTSNSFFVLTQRGSLKRMAVDDIPQTSRANRGLLVLRELKTKPHRVFLAGGVQSDTSAEQFDLFTDIPEEETNQQMLEVISKTGQTYEIALETLSLSERTSNGSFISDTISDQEVLVARTR.

Positions L30 to L496 constitute a Topo IIA-type catalytic domain. Y118 (O-(5'-phospho-DNA)-tyrosine intermediate) is an active-site residue.

Belongs to the type II topoisomerase GyrA/ParC subunit family. ParC type 2 subfamily. Heterotetramer composed of ParC and ParE.

The protein resides in the cell membrane. The catalysed reaction is ATP-dependent breakage, passage and rejoining of double-stranded DNA.. Its function is as follows. Topoisomerase IV is essential for chromosome segregation. It relaxes supercoiled DNA. Performs the decatenation events required during the replication of a circular DNA molecule. The sequence is that of DNA topoisomerase 4 subunit A from Streptococcus pyogenes serotype M18 (strain MGAS8232).